A 123-amino-acid polypeptide reads, in one-letter code: Large ribosomal subunit protein bL12 (123 aa).

Belongs to the bacterial ribosomal protein bL12 family. In terms of assembly, homodimer. Part of the ribosomal stalk of the 50S ribosomal subunit. Forms a multimeric L10(L12)X complex, where L10 forms an elongated spine to which 2 to 4 L12 dimers bind in a sequential fashion. Binds GTP-bound translation factors.

Forms part of the ribosomal stalk which helps the ribosome interact with GTP-bound translation factors. Is thus essential for accurate translation. This is Large ribosomal subunit protein bL12 from Burkholderia vietnamiensis (strain G4 / LMG 22486) (Burkholderia cepacia (strain R1808)).